The chain runs to 393 residues: Homeobox protein knotted-1-like 4 (393 aa).

A compositionally biased stretch (polar residues) spans 1-13; the sequence is MAFHNNHFNHFTD. Disordered regions lie at residues 1–39 and 81–114; these read MAFH…PPNW and QRGN…EKKE. An ELK domain is found at 286-306; that stretch reads ELKHELKQGYKEKIVDIREEI. The segment at residues 307 to 370 is a DNA-binding region (homeobox; TALE-type); sequence LRKRRAGKLP…NQRKRNWHSN (64 aa). The disordered stretch occupies residues 363 to 393; that stretch reads RKRNWHSNPSSSTVSKNKRRSNAGENSGRDR. Residues 368-377 show a composition bias toward polar residues; it reads HSNPSSSTVS.

The protein belongs to the TALE/KNOX homeobox family. As to quaternary structure, may form heterodimeric complex with the TALE/BELL proteins. Interacts with OFP1, OFP2, OFP4 and OFP12. Interacts with KNATM-B.

The protein resides in the nucleus. This chain is Homeobox protein knotted-1-like 4 (KNAT4), found in Arabidopsis thaliana (Mouse-ear cress).